A 103-amino-acid chain; its full sequence is uncharacterized protein (103 aa).

The segment covering 1-10 (MVVKKSKPKN) has biased composition (basic residues). 2 disordered regions span residues 1–38 (MVVK…KGKK) and 77–103 (AVFS…NEKK).

This is an uncharacterized protein from Schizosaccharomyces pombe (strain 972 / ATCC 24843) (Fission yeast).